The chain runs to 599 residues: uncharacterized protein (599 aa).

Low complexity predominate over residues 1–13 (MSSSSSHNSFSGS). Disordered stretches follow at residues 1-27 (MSSS…IDGL) and 41-86 (YPSN…DDTN). Residues 14 to 27 (KTNAAEGQNSIDGL) show a composition bias toward polar residues. The span at 44 to 70 (NEEKEVKETDIVPDENKVNELDVHKQS) shows a compositional bias: basic and acidic residues. The next 14 helical transmembrane spans lie at 97 to 117 (IVVP…TIVT), 135 to 155 (WIGS…GVFC), 162 to 182 (IVLY…GASQ), 192 to 212 (AIQG…ISDI), 223 to 243 (GILA…GGAI), 251 to 271 (WIFF…VVFL), 290 to 310 (FIGL…ISLG), 321 to 341 (ILCY…YDTF), 359 to 379 (AALL…AYYV), 396 to 416 (VHTI…GMVL), 423 to 443 (LPLI…MICV), 452 to 472 (VMGL…PPLI), 489 to 509 (TLMF…EVIF), and 552 to 572 (VIWI…FFIK).

Belongs to the major facilitator superfamily. TCR/Tet family.

Its subcellular location is the membrane. This is an uncharacterized protein from Schizosaccharomyces pombe (strain 972 / ATCC 24843) (Fission yeast).